A 236-amino-acid polypeptide reads, in one-letter code: MTGYEARLITFGTWMYSVNKEQLARAGFYAIGQEDKVQCFHCGGGLANWKPKEDPWEQHAKWYPGCKYLLEEKGHEYINNIHLTRSLEGALVQTTKKTPSLTKRISDTIFPNPMLQEAIRMGFDFKDVKKIMEERIQTSGSNYKTLEVLVADLVSAQKDTTENELNQTSLQREISPEEPLRRLQEEKLCKICMDRHIAVVFIPCGHLVTCKQCAEAVDRCPMCSAVIDFKQRVFMS.

One copy of the BIR repeat lies at 7 to 70 (RLITFGTWMY…KWYPGCKYLL (64 aa)). The Zn(2+) site is built by Cys-39, Cys-42, His-59, and Cys-66. The segment at 189–224 (CKICMDRHIAVVFIPCGHLVTCKQCAEAVDRCPMCS) adopts an RING-type zinc-finger fold.

Belongs to the IAP family. Binds to caspase-9. In terms of tissue distribution, testis specific in normal tissues.

The protein localises to the cytoplasm. Functionally, protects against apoptosis mediated by BAX. The sequence is that of Baculoviral IAP repeat-containing protein 8 (BIRC8) from Homo sapiens (Human).